The primary structure comprises 95 residues: Alpha-bungarotoxin isoform V31 (95 aa).

Positions 1–21 (MKTLLLTLVVVTIVCLDLGYT) are cleaved as a signal peptide. 5 disulfides stabilise this stretch: C24-C44, C37-C65, C50-C54, C69-C80, and C81-C86.

This sequence belongs to the three-finger toxin family. Long-chain subfamily. Type II alpha-neurotoxin sub-subfamily. In terms of assembly, monomer in solution, homodimer in crystal state. As to expression, expressed by the venom gland.

It localises to the secreted. Functionally, binds with high affinity to muscular (alpha-1/CHRNA1) and neuronal (alpha-7/CHRNA7) nicotinic acetylcholine receptor (nAChR) and inhibits acetylcholine from binding to the receptor, thereby impairing neuromuscular and neuronal transmission. This Bungarus multicinctus (Many-banded krait) protein is Alpha-bungarotoxin isoform V31.